The following is a 499-amino-acid chain: Circadian clock oscillator protein KaiC (499 aa).

KaiC domains follow at residues 1–243 (MQSS…VSVF) and 257–499 (VRIS…DERA). G45, T46, G47, K48, T49, S85, K220, L221, R222, T224, H226, T286, G287, T288, G289, K290, T291, and L292 together coordinate ATP. T49 provides a ligand contact to Mg(2+). Mg(2+) is bound at residue T291. Mg(2+) is bound at residue E314. Residue W327 participates in ATP binding. S427 carries the post-translational modification Phosphoserine; by autocatalysis. T428 is subject to Phosphothreonine; by autocatalysis. 7 residues coordinate ATP: R447, K453, M454, R455, S457, H459, and K461.

Belongs to the KaiC family. In terms of assembly, homohexamer; hexamerization is dependent on ATP-binding. Component of the KaiBC complex. KaiC interacts with SasA, activating its autokinase function and leading to RpaA activation. It depends on Mg(2+) as a cofactor. Post-translationally, phosphorylated on serine and threonine residues by autocatalysis. Has a 4 step phosphorylation cycle; the autokinase acts first on Thr-428, then Ser-427. When Ser-427 is modified KaiC switches to an autophosphatase mode, acting first on phospho-Thr-428 then phospho-Ser-427.

It catalyses the reaction L-seryl-[protein] + ATP = O-phospho-L-seryl-[protein] + ADP + H(+). The catalysed reaction is L-threonyl-[protein] + ATP = O-phospho-L-threonyl-[protein] + ADP + H(+). The enzyme catalyses ATP + H2O = ADP + phosphate + H(+). Functionally, central component of the KaiBC oscillator complex, which constitutes the main circadian regulator in cyanobacteria. Its composition changes during the circadian cycle to control KaiC phosphorylation. Autophosphorylates and has a weak ATPase activity; ATPase activity defines the circadian period. In Prochlorococcus marinus (strain MIT 9313), this protein is Circadian clock oscillator protein KaiC.